A 714-amino-acid chain; its full sequence is DNA ligase (714 aa).

NAD(+)-binding positions include 47 to 51, 96 to 97, and glutamate 128; these read DAEYD and SL. Lysine 130 functions as the N6-AMP-lysine intermediate in the catalytic mechanism. 4 residues coordinate NAD(+): arginine 151, glutamate 188, lysine 306, and lysine 330. Zn(2+) contacts are provided by cysteine 435, cysteine 438, cysteine 453, and cysteine 459. The region spanning 637–714 is the BRCT domain; sequence RRDTAVAGKT…TEDEWLALIS (78 aa).

It belongs to the NAD-dependent DNA ligase family. LigA subfamily. Mg(2+) serves as cofactor. Mn(2+) is required as a cofactor.

The catalysed reaction is NAD(+) + (deoxyribonucleotide)n-3'-hydroxyl + 5'-phospho-(deoxyribonucleotide)m = (deoxyribonucleotide)n+m + AMP + beta-nicotinamide D-nucleotide.. Its function is as follows. DNA ligase that catalyzes the formation of phosphodiester linkages between 5'-phosphoryl and 3'-hydroxyl groups in double-stranded DNA using NAD as a coenzyme and as the energy source for the reaction. It is essential for DNA replication and repair of damaged DNA. The chain is DNA ligase from Rhodopseudomonas palustris (strain HaA2).